Consider the following 185-residue polypeptide: MKTKNEPKVILELAKESDLPEFQKKLQEAFAIAVIETFGDCEDGPIPSDNDVQESFNAPGAVVYHILQDGKNVGGAVVRINSQTNHNSLDLFYVSPEYHSQGIGLSAWKAIEAQYPDTVLWETVTPYFEKRNINFYVNKCGFHIVEFYNEHHSNPHMHRNGREDDKPLLNDDDFFRFVKIMKKKD.

The N-acetyltransferase domain maps to 9-169 (VILELAKESD…NGREDDKPLL (161 aa)).

This is an uncharacterized protein from Bacillus subtilis (strain 168).